A 21-amino-acid chain; its full sequence is Peptide PGLa-BM2 (21 aa).

Ala-21 carries the alanine amide modification.

Expressed by the skin glands.

The protein localises to the secreted. Antimicrobial peptide. The protein is Peptide PGLa-BM2 of Xenopus boumbaensis (Mawa clawed frog).